The chain runs to 255 residues: Protein C activator (255 aa).

An N-terminal signal peptide occupies residues 1–18; the sequence is MVLIRVLANLLILHLSYA. The propeptide occupies 19 to 24; it reads QKSSEL. Positions 25 to 246 constitute a Peptidase S1 domain; sequence VIGGDECNIN…YTDWIQSIIS (222 aa). 6 disulfide bridges follow: Cys31–Cys162, Cys49–Cys65, Cys97–Cys253, Cys141–Cys207, Cys173–Cys186, and Cys197–Cys222. Residue Asn45 is glycosylated (N-linked (GlcNAc...) asparagine). His64 acts as the Charge relay system in catalysis. Asn102 is a glycosylation site (N-linked (GlcNAc...) asparagine). The Charge relay system role is filled by Asp109. The N-linked (GlcNAc...) asparagine glycan is linked to Asn153. Catalysis depends on Ser201, which acts as the Charge relay system.

Belongs to the peptidase S1 family. Snake venom subfamily. As to quaternary structure, monomer. Expressed by the venom gland.

The protein localises to the secreted. Snake venom serine protease that selectively cleaves the heavy chain of protein C (PROC). This activation is thrombomodulin-independent. The chain is Protein C activator from Agkistrodon piscivorus leucostoma (Western cottonmouth).